The sequence spans 448 residues: Adenylosuccinate synthetase (448 aa).

GTP-binding positions include 22–28 and 50–52; these read GDEGKGK and GHT. Asp23 serves as the catalytic Proton acceptor. Residues Asp23 and Gly50 each contribute to the Mg(2+) site. Residues 23–26, 48–51, Thr139, Arg153, Gln234, Thr249, and Arg321 contribute to the IMP site; these read DEGK and NAGH. Catalysis depends on His51, which acts as the Proton donor. 317–323 is a binding site for substrate; the sequence is SVTGRPR. GTP contacts are provided by residues Arg323, 349–351, and 431–433; these read KLD and STG.

This sequence belongs to the adenylosuccinate synthetase family. In terms of assembly, homodimer. Requires Mg(2+) as cofactor.

It is found in the cytoplasm. The catalysed reaction is IMP + L-aspartate + GTP = N(6)-(1,2-dicarboxyethyl)-AMP + GDP + phosphate + 2 H(+). It participates in purine metabolism; AMP biosynthesis via de novo pathway; AMP from IMP: step 1/2. In terms of biological role, plays an important role in the de novo pathway of purine nucleotide biosynthesis. Catalyzes the first committed step in the biosynthesis of AMP from IMP. The chain is Adenylosuccinate synthetase from Burkholderia mallei (strain NCTC 10247).